We begin with the raw amino-acid sequence, 427 residues long: Indole diterpene prenyltransferase idtF (427 aa).

Residues arginine 97, lysine 195, arginine 264, lysine 266, tyrosine 268, and tyrosine 352 each coordinate substrate.

Belongs to the tryptophan dimethylallyltransferase family.

Its pathway is secondary metabolite biosynthesis. Functionally, indole diterpene prenyltransferase; part of the gene cluster that mediates the biosynthesis of paspalitrems, indole-diterpene (IDT) mycotoxins that are potent tremorgens in mammals. The geranylgeranyl diphosphate (GGPP) synthase idtG is proposed to catalyze the first step in IDT biosynthesis via catalysis of a series of iterative condensations of isopentenyl diphosphate (IPP) with dimethylallyl diphosphate (DMAPP), geranyl diphosphate (GPP), and farnesyl diphosphate (FPP), to form GGPP. Condensation of indole-3-glycerol phosphate with GGPP by the prenyltransferase idtC then forms 3-geranylgeranylindole (3-GGI). Epoxidation of the two terminal alkenes of the geranylgeranyl moiety by the FAD-dependent monooxygenase idtM, and cyclization by the terpene cyclase idtB then leads to the production of paspaline. The cytochrome P450 monooxygenase idtP then catalyzes oxidative elimination of the pendant methyl group at C-12 of paspaline and generates the C-10 ketone to yield 13-desoxypaxilline. The cytochrome P450 monooxygenase idtQ may catalyze the C-13 oxidation of 13-desoxypaxilline to afford paxilline. Considering that both paspalicine and paxilline were detected in C.paspali, idtQ also catalyzes the formation of paspalinine from 13-desoxypaxilline via paspalicine as an intermediate. Finally, the alpha-prenyltransferase idtF prenylates paspalinine at the C-20 or the C-21 positions to yield paspalitrems A and C, respectively. The hydroxylation of paspalitrem A at C-32 by a still unknown oxidase affords paspalitrem B. The chain is Indole diterpene prenyltransferase idtF from Claviceps paspali (Rye ergot fungus).